The chain runs to 118 residues: Large ribosomal subunit protein uL22 (118 aa).

It belongs to the universal ribosomal protein uL22 family. As to quaternary structure, part of the 50S ribosomal subunit.

Functionally, this protein binds specifically to 23S rRNA; its binding is stimulated by other ribosomal proteins, e.g. L4, L17, and L20. It is important during the early stages of 50S assembly. It makes multiple contacts with different domains of the 23S rRNA in the assembled 50S subunit and ribosome. The globular domain of the protein is located near the polypeptide exit tunnel on the outside of the subunit, while an extended beta-hairpin is found that lines the wall of the exit tunnel in the center of the 70S ribosome. The chain is Large ribosomal subunit protein uL22 from Nostoc punctiforme (strain ATCC 29133 / PCC 73102).